The chain runs to 184 residues: tRNA (cytidine(56)-2'-O)-methyltransferase (184 aa).

Residues Leu87, 112–116 (GAEKV), and 130–137 (VANQPHSE) each bind S-adenosyl-L-methionine.

The protein belongs to the aTrm56 family. As to quaternary structure, homodimer.

It localises to the cytoplasm. It carries out the reaction cytidine(56) in tRNA + S-adenosyl-L-methionine = 2'-O-methylcytidine(56) in tRNA + S-adenosyl-L-homocysteine + H(+). In terms of biological role, specifically catalyzes the AdoMet-dependent 2'-O-ribose methylation of cytidine at position 56 in tRNAs. The sequence is that of tRNA (cytidine(56)-2'-O)-methyltransferase from Methanocorpusculum labreanum (strain ATCC 43576 / DSM 4855 / Z).